The following is a 277-amino-acid chain: Caspase-3 (277 aa).

Met-1 is subject to N-acetylmethionine. 2 consecutive propeptides follow at residues 1–9 (MENTENSVD) and 10–28 (SKSI…ESMD). An N6-acetyllysine modification is found at Lys-11. Residue Ser-26 is modified to Phosphoserine. Active-site residues include His-121 and Cys-163. The residue at position 163 (Cys-163) is an S-nitrosocysteine; in inhibited form. Arg-207 is subject to (Microbial infection) ADP-riboxanated arginine.

It belongs to the peptidase C14A family. Heterotetramer that consists of two anti-parallel arranged heterodimers, each one formed by a 17 kDa (p17) and a 12 kDa (p12) subunit. Interacts with BIRC6/bruce. Cleavage by granzyme B, caspase-6, caspase-8 and caspase-10 generates the two active subunits. Additional processing of the propeptides is likely due to the autocatalytic activity of the activated protease. Active heterodimers between the small subunit of caspase-7 protease and the large subunit of caspase-3 also occur and vice versa. In terms of processing, S-nitrosylated on its catalytic site cysteine in unstimulated human cell lines and denitrosylated upon activation of the Fas apoptotic pathway, associated with an increase in intracellular caspase activity. Fas therefore activates caspase-3 not only by inducing the cleavage of the caspase zymogen to its active subunits, but also by stimulating the denitrosylation of its active site thiol. Post-translationally, ubiquitinated by BIRC6; this activity is inhibited by DIABLO/SMAC. (Microbial infection) ADP-riboxanation by C.violaceum CopC blocks CASP3 processing, preventing CASP3 activation and ability to recognize and cleave substrates. Highly expressed in lung, spleen, heart, liver and kidney. Moderate levels in brain and skeletal muscle, and low in testis. Also found in many cell lines, highest expression in cells of the immune system.

It is found in the cytoplasm. It catalyses the reaction Strict requirement for an Asp residue at positions P1 and P4. It has a preferred cleavage sequence of Asp-Xaa-Xaa-Asp-|- with a hydrophobic amino-acid residue at P2 and a hydrophilic amino-acid residue at P3, although Val or Ala are also accepted at this position.. With respect to regulation, inhibited by isatin sulfonamides. Inhibited by BIRC6; following inhibition of BIRC6-caspase binding by DIABLO/SMAC, BIRC6 is subjected to caspase cleavage, leading to an increase in active caspases. Thiol protease that acts as a major effector caspase involved in the execution phase of apoptosis. Following cleavage and activation by initiator caspases (CASP8, CASP9 and/or CASP10), mediates execution of apoptosis by catalyzing cleavage of many proteins. At the onset of apoptosis, it proteolytically cleaves poly(ADP-ribose) polymerase PARP1 at a '216-Asp-|-Gly-217' bond. Cleaves and activates sterol regulatory element binding proteins (SREBPs) between the basic helix-loop-helix leucine zipper domain and the membrane attachment domain. Cleaves and activates caspase-6, -7 and -9 (CASP6, CASP7 and CASP9, respectively). Cleaves and inactivates interleukin-18 (IL18). Involved in the cleavage of huntingtin. Triggers cell adhesion in sympathetic neurons through RET cleavage. Cleaves and inhibits serine/threonine-protein kinase AKT1 in response to oxidative stress. Acts as an inhibitor of type I interferon production during virus-induced apoptosis by mediating cleavage of antiviral proteins CGAS, IRF3 and MAVS, thereby preventing cytokine overproduction. Also involved in pyroptosis by mediating cleavage and activation of gasdermin-E (GSDME). Cleaves XRCC4 and phospholipid scramblase proteins XKR4, XKR8 and XKR9, leading to promote phosphatidylserine exposure on apoptotic cell surface. Cleaves BIRC6 following inhibition of BIRC6-caspase binding by DIABLO/SMAC. The chain is Caspase-3 (CASP3) from Homo sapiens (Human).